The primary structure comprises 698 residues: Topoisomerase subunit TopoN (698 aa).

Residue K429 forms an Isoglutamyl lysine isopeptide (Lys-Gln) (interchain with Q-Cter in protein Pup) linkage. Positions 443–473 (GAKARARAASKAKGLGTNLSLPPKLLPSRES) are disordered. Residues 479–593 (AELFLCEGDS…AGMVYVTMPP (115 aa)) enclose the Toprim domain.

Belongs to the type II topoisomerase family. In terms of assembly, a complex of TopoN and TopoM, possibly a heterotetramer. Mg(2+) serves as cofactor.

It catalyses the reaction ATP-dependent breakage, passage and rejoining of double-stranded DNA.. Its activity is regulated as follows. Inhibited by quinolone antibiotic ciprofloxacin and coumarin antibiotic novobiocin, but at much higher concentrations than is usual for DNA gyrase/topoisomerase. Its function is as follows. Catalyzes the relaxation of negatively supercoiled DNA in the presence of ATP or dATP but not other nucleotides. Individual subunits have no activity. Not able to negatively supercoil DNA, it can however introduce positive supercoils in DNA. Relaxes positive supercoils in an ATP-dependent manner. Catenates and decatenates DNA. Generates dsDNA breaks in the presence of the quinolone antibiotic ciprofloxacin, showing it is a topoisomerase. The protein is Topoisomerase subunit TopoN of Mycolicibacterium smegmatis (strain ATCC 700084 / mc(2)155) (Mycobacterium smegmatis).